Consider the following 176-residue polypeptide: Large ribosomal subunit protein uL22 (176 aa).

The segment at 113–176 (VVESRPSKDQ…EISEAKGGSD (64 aa)) is disordered. Residues 136-152 (SKAAATAPAKKSSASKA) show a composition bias toward low complexity. Over residues 159–176 (TKAESKTSEISEAKGGSD) the composition is skewed to basic and acidic residues.

It belongs to the universal ribosomal protein uL22 family. In terms of assembly, part of the 50S ribosomal subunit.

This protein binds specifically to 23S rRNA; its binding is stimulated by other ribosomal proteins, e.g. L4, L17, and L20. It is important during the early stages of 50S assembly. It makes multiple contacts with different domains of the 23S rRNA in the assembled 50S subunit and ribosome. Functionally, the globular domain of the protein is located near the polypeptide exit tunnel on the outside of the subunit, while an extended beta-hairpin is found that lines the wall of the exit tunnel in the center of the 70S ribosome. The chain is Large ribosomal subunit protein uL22 from Mycobacterium ulcerans (strain Agy99).